The chain runs to 521 residues: Serine/threonine-protein kinase A (521 aa).

In terms of domain architecture, Protein kinase spans Tyr-15–Ile-289. ATP is bound by residues Val-21 to Val-29 and Lys-45. Asp-148 (proton acceptor) is an active-site residue.

This sequence belongs to the protein kinase superfamily. Ser/Thr protein kinase family. Autophosphorylated.

It carries out the reaction L-seryl-[protein] + ATP = O-phospho-L-seryl-[protein] + ADP + H(+). The catalysed reaction is L-threonyl-[protein] + ATP = O-phospho-L-threonyl-[protein] + ADP + H(+). Functionally, protein kinase that regulates cellular motility via phosphorylation of membrane proteins. In Synechocystis sp. (strain ATCC 27184 / PCC 6803 / Kazusa), this protein is Serine/threonine-protein kinase A (spkA).